We begin with the raw amino-acid sequence, 1141 residues long: Serine-aspartate repeat-containing protein E (1141 aa).

The N-terminal stretch at 1–52 (MINRDNKKAITKKGMISNRLNKFSIRKYTVGTASILVGTTLIFGLGNQEAKA) is a signal peptide. The YSIRK-G/S signaling motif signature appears at 23 to 34 (FSIRKYTVGTAS). The ligand binding A region stretch occupies residues 53 to 601 (AENTSTENAK…GDGTVKPEEK (549 aa)). The tract at residues 54 to 225 (ENTSTENAKQ…SKEELKNNPE (172 aa)) is disordered. The span at 61–75 (AKQDDATTSDNKEVV) shows a compositional bias: basic and acidic residues. Positions 77-90 (EAENNSTTENDSTN) are enriched in low complexity. Residues 92-109 (IKKETNTDSQPEAKEEST) show a composition bias toward basic and acidic residues. Low complexity predominate over residues 110–126 (KSSTQQQQNNVTATTET). Over residues 130 to 145 (NIEKENVKPSTDKTAT) the composition is skewed to basic and acidic residues. Residues 158–207 (PNNTNNDVTTKPSTSEIQTKPTTPQESTNIENSQPQPTPSKVDNQVTDAT) are compositionally biased toward polar residues. Residues 216 to 225 (SKEELKNNPE) are compositionally biased toward basic and acidic residues. CNA-B domains are found at residues 602 to 714 (LYKI…YKEP), 715 to 824 (KYNL…YKTP), and 825 to 935 (KYSL…EEDT). The tract at residues 899 to 1117 (VTNTTEDDKD…GSENNGSNNA (219 aa)) is disordered. 2 stretches are compositionally biased toward acidic residues: residues 903–913 (TEDDKDADGGE) and 930–1080 (YFEE…DSDS). The LPXTG sorting signal motif lies at 1104 to 1108 (LPETG). Residue T1107 is modified to Pentaglycyl murein peptidoglycan amidated threonine. A propeptide spans 1108 to 1141 (GSENNGSNNATLFGGLFAALGSLLLFGRRKKQNK) (removed by sortase).

It belongs to the serine-aspartate repeat-containing protein (SDr) family. Interacts with host complement factor H/CFAH (via C-terminus). Interacts with host complement regulator C4BPA.

The protein localises to the secreted. Its subcellular location is the cell wall. Cell surface-associated calcium-binding protein which plays an important role in adhesion and pathogenesis. Contributes to the resistance to killing by innate immune components in blood and thus attenuates bacterial clearance by interacting with host complement factor H/CFAH and modulating its activity. Also inhibits bacterial opsonization and killing by interacting with host complement regulator C4BPA and thus inhibiting classical complement pathway activation. This Staphylococcus aureus (strain MSSA476) protein is Serine-aspartate repeat-containing protein E (sdrE).